Consider the following 47-residue polypeptide: Large ribosomal subunit protein bL34 (47 aa).

It belongs to the bacterial ribosomal protein bL34 family.

The sequence is that of Large ribosomal subunit protein bL34 from Mycobacterium tuberculosis (strain ATCC 25177 / H37Ra).